We begin with the raw amino-acid sequence, 283 residues long: 4-diphosphocytidyl-2-C-methyl-D-erythritol kinase (283 aa).

Residue Lys10 is part of the active site. 99–109 (PMGGGLGGGSS) is an ATP binding site. Asp141 is an active-site residue.

The protein belongs to the GHMP kinase family. IspE subfamily. As to quaternary structure, homodimer.

It catalyses the reaction 4-CDP-2-C-methyl-D-erythritol + ATP = 4-CDP-2-C-methyl-D-erythritol 2-phosphate + ADP + H(+). The protein operates within isoprenoid biosynthesis; isopentenyl diphosphate biosynthesis via DXP pathway; isopentenyl diphosphate from 1-deoxy-D-xylulose 5-phosphate: step 3/6. In terms of biological role, catalyzes the phosphorylation of the position 2 hydroxy group of 4-diphosphocytidyl-2C-methyl-D-erythritol. This is 4-diphosphocytidyl-2-C-methyl-D-erythritol kinase from Escherichia coli O127:H6 (strain E2348/69 / EPEC).